Here is a 151-residue protein sequence, read N- to C-terminus: UPF0756 membrane protein GTNG_2661 (151 aa).

The next 4 membrane-spanning stretches (helical) occupy residues V5–I25, W53–F73, W86–L106, and L116–I136.

It belongs to the UPF0756 family.

Its subcellular location is the cell membrane. This chain is UPF0756 membrane protein GTNG_2661, found in Geobacillus thermodenitrificans (strain NG80-2).